A 1481-amino-acid polypeptide reads, in one-letter code: Cystic fibrosis transmembrane conductance regulator (1481 aa).

Residues 1–77 (MQRSPLEKAS…KLINALRRCF (77 aa)) are Cytoplasmic-facing. The helical transmembrane segment at 78–98 (FWRFTFYGILLYLGEVTKAVQ) threads the bilayer. The region spanning 81–365 (FTFYGILLYL…WAVQTWYDSL (285 aa)) is the ABC transmembrane type-1 1 domain. The Extracellular segment spans residues 99 to 122 (PLLLGRIIASYDPDNKTERSIAIY). Residues 123–146 (LGIGLCLLFIVRTLLLHPAIFGLH) traverse the membrane as a helical segment. Over 147 to 195 (HIGMQMRIAMFSLIYKKTLKLSSRVLDKISIGQLVSLLSNNLNKFDEGL) the chain is Cytoplasmic. The helical transmembrane segment at 196-216 (ALAHFVWIAPLQVALLMGLIW) threads the bilayer. Over 217–222 (ELLQAS) the chain is Extracellular. A helical transmembrane segment spans residues 223–243 (AFCGLGFLIVLALFQAGLGRM). Residues 244-298 (MMKYRDQRAGKINERLVITSEMIENIQSVKAYCWEEAMEKMIENLRQTELKLTRK) are Cytoplasmic-facing. Residues 299 to 319 (AAYVRYFNSSAFFFSGFFVVF) traverse the membrane as a helical segment. Residues 320-339 (LSVLPYALIKGIALRKIFTT) are Extracellular-facing. A helical membrane pass occupies residues 340-358 (ISFCIVLRMAVTRQFPWAV). At 359–858 (QTWYDSLGAI…YLRYITLHKS (500 aa)) the chain is on the cytoplasmic side. ATP-binding positions include W401, S434, 458–465 (GSTGAGKT), and Q493. Positions 423-646 (NGDDNLFFSN…RPDFSSKLMG (224 aa)) constitute an ABC transporter 1 domain. A lipid anchor (S-palmitoyl cysteine) is attached at C524. Phosphoserine is present on residues S549 and S660. Residues 654–831 (SSERRNSILT…EEINEEDLKE (178 aa)) form a disordered R region region. S670 carries the phosphoserine; by PKA modification. S686 is subject to Phosphoserine. K688 is covalently cross-linked (Glycyl lysine isopeptide (Lys-Gly) (interchain with G-Cter in ubiquitin)). Phosphoserine occurs at positions 700 and 712. At T717 the chain carries Phosphothreonine. A phosphoserine mark is found at S737, S753, S768, S790, S795, and S813. The chain crosses the membrane as a helical span at residues 859 to 879 (LIFVLIWCLVIFLAEVAASLV). The 297-residue stretch at 859 to 1155 (LIFVLIWCLV…AVNSSIDVDS (297 aa)) folds into the ABC transmembrane type-1 2 domain. The Extracellular portion of the chain corresponds to 880–918 (LLWLLGNTRFQDKGNSTYSRNNSYAVIITNTSSYYVFYI). 3 N-linked (GlcNAc...) asparagine glycosylation sites follow: N894, N900, and N909. The discontinuously helical transmembrane segment at 919 to 939 (YVGVADTLLALGFFRGLPLVH) threads the bilayer. The Cytoplasmic portion of the chain corresponds to 940 to 990 (TLITVSKILHHKMLHSVLQAPMSTLNTLKAGGILNRFSKDIAILDDLLPLT). Residues 991–1011 (IFDFIQLLLIVIGAIAVVSVL) traverse the membrane as a helical segment. The Extracellular segment spans residues 1012-1013 (QP). The helical transmembrane segment at 1014–1034 (YIFLATVPVIAAFILLRAYFL) threads the bilayer. At 1035–1095 (QTSQQLKQLE…TASWFLYLST (61 aa)) the chain is on the cytoplasmic side. A helical membrane pass occupies residues 1096–1116 (LRWFQMRIEMIFVIFFIAVTF). The Extracellular segment spans residues 1117–1130 (ISILTTGEGEGTVG). Residues 1131–1151 (IILTLAMNIMSTLQWAVNSSI) form a helical membrane-spanning segment. Over 1152–1481 (DVDSLMRSVS…TEEEVQETRL (330 aa)) the chain is Cytoplasmic. The ABC transporter 2 domain occupies 1211–1444 (MTIKDLTAKY…KSLFRQAISH (234 aa)). Residues Y1220 and 1245-1252 (GRTGSGKS) each bind ATP. The interaction with GORASP2 stretch occupies residues 1387 to 1481 (RALKQAFADC…TEEEVQETRL (95 aa)). Residue C1396 is the site of S-palmitoyl cysteine attachment. S1445 and S1457 each carry phosphoserine. The segment at 1453–1481 (HRNSSKYKSRPQIASLKEETEEEVQETRL) is disordered. Residues 1471–1481 (ETEEEVQETRL) show a composition bias toward acidic residues. A PDZ-binding motif is present at residues 1479-1481 (TRL).

Belongs to the ABC transporter superfamily. ABCC family. CFTR transporter (TC 3.A.1.202) subfamily. In terms of assembly, monomer; does not require oligomerization for channel activity. May form oligomers in the membrane. Interacts with SLC26A3, SLC26A6 and NHERF1. Interacts with SHANK2. Interacts with MYO6. Interacts (via C-terminus) with GOPC (via PDZ domain); this promotes CFTR internalization and thereby decreases channel activity. Interacts with SLC4A7 through NHERF1. Found in a complex with MYO5B and RAB11A. Interacts with ANO1. Interacts with SLC26A8. Interacts with AHCYL1; the interaction increases CFTR activity. Interacts with CSE1L. The core-glycosylated form interacts with GORASP2 (via PDZ GRASP-type 1 domain) in respone to ER stress. Interacts with MARCHF2; the interaction leads to CFTR ubiqtuitination and degradation. Interacts with ADGRG2. N-glycosylated. Post-translationally, phosphorylated; cAMP treatment promotes phosphorylation and activates the channel. Dephosphorylation decreases the ATPase activity (in vitro). Phosphorylation at PKA sites activates the channel. Phosphorylation at PKC sites enhances the response to phosphorylation by PKA. Phosphorylated by AMPK; this inhibits channel activity. In terms of processing, ubiquitinated, leading to its degradation in the lysosome. Deubiquitination by USP10 in early endosomes enhances its endocytic recycling to the cell membrane. Ubiquitinated by RNF185 during ER stress. Ubiquitinated by MARCHF2.

The protein resides in the apical cell membrane. It localises to the early endosome membrane. Its subcellular location is the cell membrane. The protein localises to the recycling endosome membrane. It is found in the endoplasmic reticulum membrane. The protein resides in the nucleus. It catalyses the reaction ATP + H2O + closed Cl(-) channel = ADP + phosphate + open Cl(-) channel.. It carries out the reaction chloride(in) = chloride(out). The enzyme catalyses hydrogencarbonate(in) = hydrogencarbonate(out). The catalysed reaction is ATP + H2O = ADP + phosphate + H(+). Functionally, epithelial ion channel that plays an important role in the regulation of epithelial ion and water transport and fluid homeostasis. Mediates the transport of chloride ions across the cell membrane. Possesses an intrinsic ATPase activity and utilizes ATP to gate its channel; the passive flow of anions through the channel is gated by cycles of ATP binding and hydrolysis by the ATP-binding domains. The ion channel is also permeable to HCO(3)(-); selectivity depends on the extracellular chloride concentration. Exerts its function also by modulating the activity of other ion channels and transporters. Contributes to the regulation of the pH and the ion content of the epithelial fluid layer. Modulates the activity of the epithelial sodium channel (ENaC) complex, in part by regulating the cell surface expression of the ENaC complex. May regulate bicarbonate secretion and salvage in epithelial cells by regulating the transporter SLC4A7. Can inhibit the chloride channel activity of ANO1. Plays a role in the chloride and bicarbonate homeostasis during sperm epididymal maturation and capacitation. The protein is Cystic fibrosis transmembrane conductance regulator of Saimiri boliviensis boliviensis (Bolivian squirrel monkey).